The following is a 188-amino-acid chain: Large ribosomal subunit protein bL35m (188 aa).

It belongs to the bacterial ribosomal protein bL35 family.

It localises to the mitochondrion. This Pongo abelii (Sumatran orangutan) protein is Large ribosomal subunit protein bL35m (MRPL35).